The following is a 150-amino-acid chain: FAD synthase (150 aa).

ATP is bound by residues 11–12 (TF), 16–19 (HPGH), aspartate 96, and tyrosine 124.

It belongs to the archaeal FAD synthase family. In terms of assembly, homodimer. A divalent metal cation is required as a cofactor.

The enzyme catalyses FMN + ATP + H(+) = FAD + diphosphate. It functions in the pathway cofactor biosynthesis; FAD biosynthesis; FAD from FMN: step 1/1. Catalyzes the transfer of the AMP portion of ATP to flavin mononucleotide (FMN) to produce flavin adenine dinucleotide (FAD) coenzyme. The sequence is that of FAD synthase from Methanocaldococcus fervens (strain DSM 4213 / JCM 15782 / AG86) (Methanococcus fervens).